The following is a 98-amino-acid chain: Flagellar hook-basal body complex protein FliE (98 aa).

It belongs to the FliE family.

The protein resides in the bacterial flagellum basal body. The sequence is that of Flagellar hook-basal body complex protein FliE from Listeria monocytogenes serovar 1/2a (strain ATCC BAA-679 / EGD-e).